A 295-amino-acid chain; its full sequence is Sulfotransferase 1E1 (295 aa).

Residue 48-53 (KSGSTW) participates in 3'-phosphoadenylyl sulfate binding. 106-108 (KTH) serves as a coordination point for substrate. The Proton acceptor role is filled by His-108. Positions 130 and 138 each coordinate 3'-phosphoadenylyl sulfate. Ser-156 carries the phosphoserine modification. Residues Tyr-193, 227-232 (TSFQEM), and 257-259 (RKG) each bind 3'-phosphoadenylyl sulfate.

The protein belongs to the sulfotransferase 1 family. Homodimer. Liver of young mature males and uterus.

It localises to the cytoplasm. The protein localises to the cytosol. The enzyme catalyses estrone + 3'-phosphoadenylyl sulfate = estrone 3-sulfate + adenosine 3',5'-bisphosphate + H(+). The catalysed reaction is (24S)-hydroxycholesterol + 3'-phosphoadenylyl sulfate = (24S)-hydroxycholesterol 3-sulfate + adenosine 3',5'-bisphosphate + H(+). It catalyses the reaction 17beta-estradiol + 3'-phosphoadenylyl sulfate = 17beta-estradiol 3-sulfate + adenosine 3',5'-bisphosphate + H(+). It carries out the reaction 3beta-hydroxyandrost-5-en-17-one + 3'-phosphoadenylyl sulfate = dehydroepiandrosterone 3-sulfate + adenosine 3',5'-bisphosphate + H(+). The enzyme catalyses 4-ethylphenol + 3'-phosphoadenylyl sulfate = 4-ethylphenyl sulfate + adenosine 3',5'-bisphosphate + H(+). With respect to regulation, inhibited by estradiol. Sulfotransferase that utilizes 3'-phospho-5'-adenylyl sulfate (PAPS) as sulfonate donor to catalyze the sulfate conjugation of estradiol and estrone. Is a key enzyme in estrogen homeostasis, the sulfation of estrogens leads to their inactivation. Also sulfates dehydroepiandrosterone (DHEA), pregnenolone, (24S)-hydroxycholesterol and xenobiotic compounds like ethinylestradiol, equalenin, diethyl stilbesterol and 1-naphthol at significantly lower efficiency. Does not sulfonate cortisol, testosterone and dopamine. May play a role in gut microbiota-host metabolic interaction. O-sulfonates 4-ethylphenol (4-EP), a dietary tyrosine-derived metabolite produced by gut bacteria. The product 4-EPS crosses the blood-brain barrier and may negatively regulate oligodendrocyte maturation and myelination, affecting the functional connectivity of different brain regions associated with the limbic system. This Rattus norvegicus (Rat) protein is Sulfotransferase 1E1.